We begin with the raw amino-acid sequence, 128 residues long: UPF0325 protein YaeH (128 aa).

The protein belongs to the UPF0325 family.

In Salmonella agona (strain SL483), this protein is UPF0325 protein YaeH.